A 2235-amino-acid polypeptide reads, in one-letter code: Bridge-like lipid transfer protein family member 2 (2235 aa).

The signal sequence occupies residues 1-31 (MPLFFSALLVLLLVALSALFLGRWLVVRLAT). The tract at residues 29-108 (LATKWCQRKL…LQKVSDLSAP (80 aa)) is transmembrane domain. Ser-563 is subject to Phosphoserine. An N-linked (GlcNAc...) asparagine glycan is attached at Asn-730. The disordered stretch occupies residues 1495-1529 (PQMPAKKPKRGVPTSASAPPRVNTPSFSGQPDKGS). Residues 1813–1885 (SILHLQEAVR…LNILIRCFKD (73 aa)) are a coiled coil. Phosphoserine occurs at positions 1846, 2090, and 2094. The segment at 2074–2099 (GKGVAQGLTRSSGVRRSFRKSPEHPV) is disordered.

This sequence belongs to the SABRE family. In terms of tissue distribution, expressed in pancreas, placenta and up-regulated in breast carcinoma epithelial cells, ductal in situ carcinoma (DCIS), invasive breast carcinoma (IBC) and metastatic breast carcinoma cells (MET).

The protein resides in the cell membrane. It localises to the endoplasmic reticulum membrane. Its subcellular location is the mitochondrion membrane. Tube-forming lipid transport protein which binds to phosphatidylinositols and affects phosphatidylinositol-4,5-bisphosphate (PtdIns-4,5-P2) distribution. The chain is Bridge-like lipid transfer protein family member 2 from Homo sapiens (Human).